Consider the following 353-residue polypeptide: Inositol 3-kinase (353 aa).

ATP contacts are provided by residues Ser197, 247-250 (GAGD), and Asn274. Asp250 serves as the catalytic Proton acceptor.

The protein belongs to the carbohydrate kinase pfkB family.

It carries out the reaction myo-inositol + ATP = 1D-myo-inositol 3-phosphate + ADP + H(+). Its function is as follows. Kinase that phosphorylates myo-inositol to produce multiple myo-inositol monophosphates. Participates in phytic acid biosynthesis in developing seeds. Phytic acid is the primary storage form of phosphorus in cereal grains and other plant seeds. This Arabidopsis thaliana (Mouse-ear cress) protein is Inositol 3-kinase.